A 148-amino-acid chain; its full sequence is Macrodomain Ter protein (148 aa).

Belongs to the MatP family. In terms of assembly, homodimer.

The protein localises to the cytoplasm. Its function is as follows. Required for spatial organization of the terminus region of the chromosome (Ter macrodomain) during the cell cycle. Prevents early segregation of duplicated Ter macrodomains during cell division. Binds specifically to matS, which is a 13 bp signature motif repeated within the Ter macrodomain. The sequence is that of Macrodomain Ter protein from Haemophilus influenzae (strain 86-028NP).